A 360-amino-acid chain; its full sequence is Peptide chain release factor 1 (360 aa).

Q237 is subject to N5-methylglutamine.

Belongs to the prokaryotic/mitochondrial release factor family. Post-translationally, methylated by PrmC. Methylation increases the termination efficiency of RF1.

The protein localises to the cytoplasm. In terms of biological role, peptide chain release factor 1 directs the termination of translation in response to the peptide chain termination codons UAG and UAA. The protein is Peptide chain release factor 1 of Pseudomonas putida (strain W619).